The chain runs to 419 residues: Cytosine permease (419 aa).

Residues 1-19 (MSQDNNFSQGPVPQSARKG) are Cytoplasmic-facing. The chain crosses the membrane as a helical span at residues 20–39 (VLALTFVMLGLTFFSASMWT). The Periplasmic segment spans residues 40–51 (GGTLGTGLSYHD). A helical membrane pass occupies residues 52–71 (FFLAVLIGNLLLGIYTSFLG). Over 72 to 100 (YIGAKTGLTTHLLARFSFGVKGSWLPSLL) the chain is Cytoplasmic. A helical transmembrane segment spans residues 101–120 (LGGTQVGWFGVGVAMFAIPV). Over 121–127 (GKATGLD) the chain is Periplasmic. The chain crosses the membrane as a helical span at residues 128–147 (INLLIAVSGLLMTVTVFFGI). The Cytoplasmic portion of the chain corresponds to 148–152 (SALTV). Residues 153 to 172 (LSVIAVPAIACLGGYSVWLA) traverse the membrane as a helical segment. Residues 173 to 192 (VNGMGGLDALKAVVPAQPLD) lie on the Periplasmic side of the membrane. A helical membrane pass occupies residues 193–212 (FNVALALVVGSFISAGTLTA). Residues 213-221 (DFVRFGRNA) lie on the Cytoplasmic side of the membrane. The chain crosses the membrane as a helical span at residues 222–242 (KLAVLVAMVAFFLGNSLMFIF). The Periplasmic portion of the chain corresponds to 243–257 (GAAGAAALGMADISD). The chain crosses the membrane as a helical span at residues 258–277 (VMIAQGLLLPAIVVLGLNIW). The Cytoplasmic segment spans residues 278 to 300 (TTNDNALYASGLGFANITGMSSK). A helical transmembrane segment spans residues 301–320 (TLSVINGIIGTVCALWLYNN). Position 321 (F321) is a topological domain, periplasmic. A helical transmembrane segment spans residues 322–341 (VGWLTFLSAAIPPVGGVIIA). Over 342-358 (DYLMNRRRYEHFATTRM) the chain is Cytoplasmic. A helical transmembrane segment spans residues 359 to 378 (MSVNWVAILAVALGIAAGHW). The Periplasmic portion of the chain corresponds to 379–380 (LP). A helical membrane pass occupies residues 381-400 (GIVPVNAVLGGALSYLILNP). Residues 401 to 419 (ILNRKTTAAMTHVEANSVE) are Cytoplasmic-facing.

The protein belongs to the purine-cytosine permease (2.A.39) family.

The protein localises to the cell inner membrane. Functionally, required for cytosine transport into the cell. This is Cytosine permease (codB) from Escherichia coli O6:H1 (strain CFT073 / ATCC 700928 / UPEC).